A 77-amino-acid polypeptide reads, in one-letter code: DNA-directed RNA polymerase subunit epsilon (77 aa).

It belongs to the RNA polymerase subunit epsilon family. RNAP is composed of a core of 2 alpha, a beta and a beta' subunit. The core is associated with a delta subunit, and at least one of epsilon or omega. When a sigma factor is associated with the core the holoenzyme is formed, which can initiate transcription.

It catalyses the reaction RNA(n) + a ribonucleoside 5'-triphosphate = RNA(n+1) + diphosphate. A non-essential component of RNA polymerase (RNAP). This Streptococcus pneumoniae (strain P1031) protein is DNA-directed RNA polymerase subunit epsilon.